Reading from the N-terminus, the 137-residue chain is Nucleoside diphosphate kinase (137 aa).

Residues Lys-9, Phe-57, Arg-85, Thr-91, Arg-102, and Asn-112 each contribute to the ATP site. His-115 acts as the Pros-phosphohistidine intermediate in catalysis.

The protein belongs to the NDK family. Homotetramer. The cofactor is Mg(2+).

The protein resides in the cytoplasm. The enzyme catalyses a 2'-deoxyribonucleoside 5'-diphosphate + ATP = a 2'-deoxyribonucleoside 5'-triphosphate + ADP. The catalysed reaction is a ribonucleoside 5'-diphosphate + ATP = a ribonucleoside 5'-triphosphate + ADP. Its function is as follows. Major role in the synthesis of nucleoside triphosphates other than ATP. The ATP gamma phosphate is transferred to the NDP beta phosphate via a ping-pong mechanism, using a phosphorylated active-site intermediate. This chain is Nucleoside diphosphate kinase, found in Geobacter sp. (strain M21).